Here is a 185-residue protein sequence, read N- to C-terminus: Lipid A acyltransferase PagP (185 aa).

The signal sequence occupies residues 1-24 (MKTHNDILAALAALPLFLTGAAFA). Active-site residues include His57, Asp100, and Ser101.

This sequence belongs to the lipid A palmitoyltransferase family. In terms of assembly, homodimer.

It localises to the cell outer membrane. It catalyses the reaction a lipid A + a 1,2-diacyl-sn-glycero-3-phosphocholine = a hepta-acyl lipid A + a 2-acyl-sn-glycero-3-phosphocholine. The enzyme catalyses a lipid IVA + a 1,2-diacyl-sn-glycero-3-phosphocholine = a lipid IVB + a 2-acyl-sn-glycero-3-phosphocholine. It carries out the reaction a lipid IIA + a 1,2-diacyl-sn-glycero-3-phosphocholine = a lipid IIB + a 2-acyl-sn-glycero-3-phosphocholine. Transfers a fatty acid residue from the sn-1 position of a phospholipid to the N-linked hydroxyfatty acid chain on the proximal unit of lipid A or its precursors. This is Lipid A acyltransferase PagP from Edwardsiella tarda (strain FL6-60).